A 510-amino-acid polypeptide reads, in one-letter code: 2,3-bisphosphoglycerate-independent phosphoglycerate mutase (510 aa).

Mn(2+) is bound by residues Asp-13 and Ser-63. Ser-63 functions as the Phosphoserine intermediate in the catalytic mechanism. Residues His-124, 154-155 (RD), Arg-186, Arg-192, 262-265 (RADR), and Lys-334 contribute to the substrate site. The Mn(2+) site is built by Asp-401, His-405, Asp-442, His-443, and His-461.

It belongs to the BPG-independent phosphoglycerate mutase family. Monomer. Requires Mn(2+) as cofactor.

It catalyses the reaction (2R)-2-phosphoglycerate = (2R)-3-phosphoglycerate. The protein operates within carbohydrate degradation; glycolysis; pyruvate from D-glyceraldehyde 3-phosphate: step 3/5. Its function is as follows. Catalyzes the interconversion of 2-phosphoglycerate and 3-phosphoglycerate. The chain is 2,3-bisphosphoglycerate-independent phosphoglycerate mutase from Aliivibrio fischeri (strain MJ11) (Vibrio fischeri).